Reading from the N-terminus, the 234-residue chain is uncharacterized protein (234 aa).

LRR repeat units follow at residues 44–63 (LEFL…LPKL), 64–84 (KLRK…EKCP), 85–107 (NLTH…PLKQ), and 111–134 (LKSL…VFKL). The segment at 161–234 (EGLDDEEEGE…GEEERGQKRK (74 aa)) is disordered. The segment covering 163–226 (LDDEEEGEHE…GEEDEEELGE (64 aa)) has biased composition (acidic residues).

It belongs to the ANP32 family. In terms of tissue distribution, expressed in activated stem cells, such as mobilized CD34+ cells and cord blood CD34+ cells, but not in resting bone marrow CD34+ cells. Expressed in a variety of neoplastic cell lines, mainly in prostatic adenocarcinoma cell lines. Not expressed in normal prostatic tissue.

This is an uncharacterized protein from Homo sapiens (Human).